Consider the following 23-residue polypeptide: NMITGAAQMXGAILVAYDSIXAA.

Belongs to the GTP-binding elongation factor family. EF-Tu/EF-1A subfamily. In terms of assembly, monomer. In terms of processing, the N-terminus is blocked. Post-translationally, the C-terminus may be subjected to proteolysis.

It localises to the cytoplasm. In terms of biological role, this protein promotes the GTP-dependent binding of aminoacyl-tRNA to the A-site of ribosomes during protein biosynthesis. This chain is Elongation factor Tu (tuf), found in Delftia acidovorans (Pseudomonas acidovorans).